Here is a 28-residue protein sequence, read N- to C-terminus: Trypsin inhibitor 2 (28 aa).

Cystine bridges form between Cys-3-Cys-20, Cys-10-Cys-22, and Cys-16-Cys-27.

Belongs to the protease inhibitor I7 (squash-type serine protease inhibitor) family.

It is found in the secreted. Inhibits trypsin. This chain is Trypsin inhibitor 2, found in Momordica charantia (Bitter gourd).